Reading from the N-terminus, the 344-residue chain is Mitochondrial mRNA pseudouridine synthase Rpusd3 (344 aa).

Residues 1–36 constitute a mitochondrion transit peptide; sequence MGALRVLRYVSMIWRPELGSCARQRDAGFGTEARRP. The interval 25-53 is disordered; that stretch reads RDAGFGTEARRPSQPHRSSKHKDLVEDQP.

This sequence belongs to the pseudouridine synthase RluA family. In terms of assembly, forms a regulatory protein-RNA complex, consisting of RCC1L, NGRN, RPUSD3, RPUSD4, TRUB2, FASTKD2 and 16S mt-rRNA.

Its subcellular location is the mitochondrion matrix. The enzyme catalyses a uridine in mRNA = a pseudouridine in mRNA. Functionally, catalyzes uridine to pseudouridine isomerization (pseudouridylation) of specific mitochondrial mRNAs (mt-mRNAs), a post-transcriptional modification necessary for their translation. Acts at position 390 in COXI mt-mRNA and at position 697-699 in mitochondrial COXIII mt-mRNA. As a component of a functional protein-RNA module, consisting of RCC1L, NGRN, RPUSD3, RPUSD4, TRUB2, FASTKD2 and 16S mitochondrial ribosomal RNA (16S mt-rRNA), controls 16S mt-rRNA abundance and may play a role in mitochondrial ribosome biogenesis. This chain is Mitochondrial mRNA pseudouridine synthase Rpusd3 (Rpusd3), found in Mus musculus (Mouse).